A 232-amino-acid polypeptide reads, in one-letter code: U2 small nuclear ribonucleoprotein B'' (232 aa).

One can recognise an RRM 1 domain in the interval 10-89 (QTVYLRNLNE…KRMRVQYAKT (80 aa)). A disordered region spans residues 90–159 (RSDCLATEDG…QEPPAPPNNI (70 aa)). Residues 108–123 (KKQEEKAAEKKRRAEE) are compositionally biased toward basic and acidic residues. Residues 127-151 (SGPNAAAQSNGTGYQASRLGKTSQE) are compositionally biased toward polar residues. The RRM 2 domain occupies 158–232 (NILFIQNLPA…NPMAISYAKK (75 aa)).

Belongs to the RRM U1 A/B'' family. Component of the spliceosome where it is associated with snRNP U2.

It is found in the nucleus. The protein localises to the cajal body. It localises to the nucleoplasm. The protein resides in the cytoplasm. In terms of biological role, involved in nuclear pre-mRNA splicing. This Oryza sativa subsp. japonica (Rice) protein is U2 small nuclear ribonucleoprotein B''.